Consider the following 248-residue polypeptide: Aspartate/glutamate leucyltransferase (248 aa).

Belongs to the R-transferase family. Bpt subfamily.

The protein resides in the cytoplasm. The enzyme catalyses N-terminal L-glutamyl-[protein] + L-leucyl-tRNA(Leu) = N-terminal L-leucyl-L-glutamyl-[protein] + tRNA(Leu) + H(+). It catalyses the reaction N-terminal L-aspartyl-[protein] + L-leucyl-tRNA(Leu) = N-terminal L-leucyl-L-aspartyl-[protein] + tRNA(Leu) + H(+). Functionally, functions in the N-end rule pathway of protein degradation where it conjugates Leu from its aminoacyl-tRNA to the N-termini of proteins containing an N-terminal aspartate or glutamate. This is Aspartate/glutamate leucyltransferase from Methylobacillus flagellatus (strain ATCC 51484 / DSM 6875 / VKM B-1610 / KT).